We begin with the raw amino-acid sequence, 412 residues long: Alanyl-tRNA editing protein Aarsd1 (412 aa).

Zn(2+) is bound by residues histidine 108, histidine 112, cysteine 208, and histidine 212.

It belongs to the class-II aminoacyl-tRNA synthetase family. Alax-L subfamily. Requires Zn(2+) as cofactor.

It localises to the cytoplasm. Functionally, functions in trans to edit the amino acid moiety from incorrectly charged tRNA(Ala). The chain is Alanyl-tRNA editing protein Aarsd1 (aarsd1) from Danio rerio (Zebrafish).